The primary structure comprises 174 residues: MNSTRCILALLLCLTQAMSGCYGQGSLIEEIENLKEYFNSSSLDVGKGGDLLFNILMSWQKDGDTKIIESQIVSFYFKLFEALKGNQAIQRSIDTIKADLFVKFFNSSMEKLNDFVKLTKIPVNDPQVQRKAVNELLSVMPHLSPKLSLRKRKRSRCCFGGGNRPVKNNLASTI.

Positions 1–23 are cleaved as a signal peptide; that stretch reads MNSTRCILALLLCLTQAMSGCYG. Residue glutamine 24 is modified to Pyrrolidone carboxylic acid. 2 N-linked (GlcNAc...) asparagine glycosylation sites follow: asparagine 39 and asparagine 106.

The protein belongs to the type II (or gamma) interferon family. Homodimer. Interacts with IFNGR1 (via extracellular domain); this interaction promotes IFNGR1 dimerization. As to expression, released primarily from activated T lymphocytes.

The protein resides in the secreted. Type II interferon produced by immune cells such as T-cells and NK cells that plays crucial roles in antimicrobial, antiviral, and antitumor responses by activating effector immune cells and enhancing antigen presentation. Primarily signals through the JAK-STAT pathway after interaction with its receptor IFNGR1 to affect gene regulation. Upon IFNG binding, IFNGR1 intracellular domain opens out to allow association of downstream signaling components JAK2, JAK1 and STAT1, leading to STAT1 activation, nuclear translocation and transcription of IFNG-regulated genes. Many of the induced genes are transcription factors such as IRF1 that are able to further drive regulation of a next wave of transcription. Plays a role in class I antigen presentation pathway by inducing a replacement of catalytic proteasome subunits with immunoproteasome subunits. In turn, increases the quantity, quality, and repertoire of peptides for class I MHC loading. Increases the efficiency of peptide generation also by inducing the expression of activator PA28 that associates with the proteasome and alters its proteolytic cleavage preference. Up-regulates as well MHC II complexes on the cell surface by promoting expression of several key molecules such as cathepsins B/CTSB, H/CTSH, and L/CTSL. Participates in the regulation of hematopoietic stem cells during development and under homeostatic conditions by affecting their development, quiescence, and differentiation. The sequence is that of Interferon gamma (IFNG) from Phodopus sungorus (Striped hairy-footed hamster).